The following is a 254-amino-acid chain: MAETAPLRVQLIARTEFTVPPDVPWETDAEGGAALVEFAGRACYQSWSKPNPRTATNASYLRHIIEVGHLSVLEHASVSFYITGISRSCTHELIRHRHFSYSQLSQRYVPENDSQVVVPPGIEGDAELEGLFTAAADASRAAYAELLAKLEAKLMGDEPREGRATLRRKQARQAARSVLPNATETRIVVTGNYRAWRHFIAMRASEHADLEIRRLAIACLRELVAVAPAVFADFEIYPLADGTEVATTPLVTEA.

In terms of domain architecture, ThyX spans 7-237 (LRVQLIARTE…PAVFADFEIY (231 aa)). Residues Ser71, 95-97 (RHR), and Gln103 contribute to the FAD site. Residues 92-95 (ELIR), 103-107 (QLSQR), and Arg176 each bind dUMP. The ThyX motif motif lies at 95–105 (RHRHFSYSQLS). FAD is bound by residues 192-194 (NYR) and His198. Arg203 contributes to the dUMP binding site. Arg203 acts as the Involved in ionization of N3 of dUMP, leading to its activation in catalysis.

The protein belongs to the thymidylate synthase ThyX family. Homotetramer. Requires FAD as cofactor.

The enzyme catalyses dUMP + (6R)-5,10-methylene-5,6,7,8-tetrahydrofolate + NADPH + H(+) = dTMP + (6S)-5,6,7,8-tetrahydrofolate + NADP(+). It functions in the pathway pyrimidine metabolism; dTTP biosynthesis. Its function is as follows. Catalyzes the reductive methylation of 2'-deoxyuridine-5'-monophosphate (dUMP) to 2'-deoxythymidine-5'-monophosphate (dTMP) while utilizing 5,10-methylenetetrahydrofolate (mTHF) as the methyl donor, and NADPH and FADH(2) as the reductant. The protein is Flavin-dependent thymidylate synthase of Mycobacterium sp. (strain JLS).